Consider the following 706-residue polypeptide: Frizzled-6 (706 aa).

An N-terminal signal peptide occupies residues Met1–Gly18. The 114-residue stretch at His19–Thr132 folds into the FZ domain. Over His19–Phe201 the chain is Extracellular. 5 disulfides stabilise this stretch: Cys24–Cys85, Cys32–Cys78, Cys69–Cys106, Cys95–Cys129, and Cys99–Cys123. Asn38 carries N-linked (GlcNAc...) asparagine glycosylation. The chain crosses the membrane as a helical span at residues Ile202–Ile222. Residues Asp223–Pro233 are Cytoplasmic-facing. Residues Ile234–Leu254 form a helical membrane-spanning segment. Residues Gly255–Val284 lie on the Extracellular side of the membrane. A helical membrane pass occupies residues Leu285–Ile305. The Cytoplasmic segment spans residues Thr306 to Ala324. A helical membrane pass occupies residues Val325–Met345. Residues Asn346 to Phe370 are Extracellular-facing. Asn352 carries N-linked (GlcNAc...) asparagine glycosylation. A helical transmembrane segment spans residues Val371–Ile391. Residues Ser392 to Arg416 lie on the Cytoplasmic side of the membrane. The chain crosses the membrane as a helical span at residues Ile417–Tyr437. Residues Glu438 to Leu473 lie on the Extracellular side of the membrane. The chain crosses the membrane as a helical span at residues Ala474–Val494. At Gly495–Thr706 the chain is on the cytoplasmic side. Positions Lys498–Trp503 match the Lys-Thr-X-X-X-Trp motif, mediates interaction with the PDZ domain of Dvl family members motif. The disordered stretch occupies residues Glu588 to Thr706. Over residues Ala646–Ile658 the composition is skewed to basic and acidic residues. A Phosphoserine modification is found at Ser653. Positions Gly662–Pro672 are enriched in polar residues. Positions Ser673 to Ser685 are enriched in low complexity. Residues Val694–Thr706 show a composition bias toward basic and acidic residues.

It belongs to the G-protein coupled receptor Fz/Smo family. Interacts with LMBR1L. Post-translationally, ubiquitinated by ZNRF3, leading to its degradation by the proteasome. Detected in adult heart, brain, placenta, lung, liver, skeletal muscle, kidney, pancreas, thymus, prostate, testis, ovary, small intestine and colon. In the fetus, expressed in brain, lung, liver and kidney.

The protein resides in the membrane. Its subcellular location is the cell membrane. It localises to the cell surface. It is found in the apical cell membrane. The protein localises to the cytoplasmic vesicle membrane. The protein resides in the endoplasmic reticulum membrane. Functionally, receptor for Wnt proteins. Most of frizzled receptors are coupled to the beta-catenin canonical signaling pathway, which leads to the activation of disheveled proteins, inhibition of GSK-3 kinase, nuclear accumulation of beta-catenin and activation of Wnt target genes. A second signaling pathway involving PKC and calcium fluxes has been seen for some family members, but it is not yet clear if it represents a distinct pathway or if it can be integrated in the canonical pathway, as PKC seems to be required for Wnt-mediated inactivation of GSK-3 kinase. Both pathways seem to involve interactions with G-proteins. May be involved in transduction and intercellular transmission of polarity information during tissue morphogenesis and/or in differentiated tissues. Together with FZD3, is involved in the neural tube closure and plays a role in the regulation of the establishment of planar cell polarity (PCP), particularly in the orientation of asymmetric bundles of stereocilia on the apical faces of a subset of auditory and vestibular sensory cells located in the inner ear. In Homo sapiens (Human), this protein is Frizzled-6 (FZD6).